A 216-amino-acid polypeptide reads, in one-letter code: Probable nicotinate-nucleotide adenylyltransferase (216 aa).

Belongs to the NadD family.

The catalysed reaction is nicotinate beta-D-ribonucleotide + ATP + H(+) = deamido-NAD(+) + diphosphate. Its pathway is cofactor biosynthesis; NAD(+) biosynthesis; deamido-NAD(+) from nicotinate D-ribonucleotide: step 1/1. In terms of biological role, catalyzes the reversible adenylation of nicotinate mononucleotide (NaMN) to nicotinic acid adenine dinucleotide (NaAD). The chain is Probable nicotinate-nucleotide adenylyltransferase from Buchnera aphidicola subsp. Schizaphis graminum (strain Sg).